We begin with the raw amino-acid sequence, 251 residues long: Carboxy-S-adenosyl-L-methionine synthase (251 aa).

Residues Y48, 73-75, N140, and R207 each bind S-adenosyl-L-methionine; that span reads GCS.

Belongs to the class I-like SAM-binding methyltransferase superfamily. Cx-SAM synthase family. Homodimer.

It carries out the reaction prephenate + S-adenosyl-L-methionine = carboxy-S-adenosyl-L-methionine + 3-phenylpyruvate + H2O. Its function is as follows. Catalyzes the conversion of S-adenosyl-L-methionine (SAM) to carboxy-S-adenosyl-L-methionine (Cx-SAM). This Hydrogenovibrio crunogenus (strain DSM 25203 / XCL-2) (Thiomicrospira crunogena) protein is Carboxy-S-adenosyl-L-methionine synthase.